The following is a 1025-amino-acid chain: DNA repair protein RAD5 (1025 aa).

A compositionally biased stretch (basic and acidic residues) spans 1-12 (MEPRQKKARFFD). Disordered stretches follow at residues 1-49 (MEPR…PAPS), 93-133 (QQAT…VHTR), and 314-336 (RAKS…SEPI). 2 stretches are compositionally biased toward polar residues: residues 37-49 (ASNS…PAPS) and 113-127 (GFET…TQVP). The span at 317–328 (SQPPSSQPPSQN) shows a compositional bias: low complexity. The Helicase ATP-binding domain occupies 427–607 (PKQERSFSGG…FSILKFLGAA (181 aa)). ATP is bound at residue 440–447 (DEMGLGKT). The DEAH box signature appears at 558–561 (DEAH). The segment at 782–826 (CPICAEDVTKLAISKCLHMGCVDCLADNVRFQESKKQTPVCCICR) adopts an RING-type zinc-finger fold. The region spanning 860–1012 (KLVALVSKLK…TLGMSEQEQK (153 aa)) is the Helicase C-terminal domain.

Belongs to the SNF2/RAD54 helicase family.

The protein localises to the cytoplasm. The protein resides in the nucleus. In terms of biological role, probable helicase, member of the UBC2/RAD6 epistasis group. Functions with DNA repair protein RAD18 in error-free postreplication DNA repair. Involved in the maintenance of wild-type rates of instability of simple repetitive sequences such as poly(GT) repeats. Seems to be involved in maintaining a balance which acts in favor of error-prone non-homologous joining during DNA double-strand breaks repairs. This Yarrowia lipolytica (strain CLIB 122 / E 150) (Yeast) protein is DNA repair protein RAD5 (RAD5).